The chain runs to 156 residues: WASQVSENRPVCKAIIQGKQFEGLVDTGADVSIIALNQWPKNWPKQKAVTGLVGIGTASEVYQSMEILHCLGPDNQESTVQPMITSIPLNLWGRDLLQQWGAEITMPAPLYSPTSQKIMTKRGYIPGKGLGKNEDGIKIPFEAKINQKREGIGYPF.

One can recognise a Peptidase A2 domain in the interval 21–96 (FEGLVDTGAD…IPLNLWGRDL (76 aa)). The active site involves Asp26. Positions 111 to 156 (YSPTSQKIMTKRGYIPGKGLGKNEDGIKIPFEAKINQKREGIGYPF) constitute a G-patch domain.

This sequence belongs to the peptidase A2 family. HERV class-II K(HML-2) subfamily. As to quaternary structure, active as a homodimer. Post-translationally, autoproteolytically processed at the N-terminus. Expected C-terminal autoprocessing not detected. The sequence shown is that of the processed Pro protein.

It carries out the reaction Processing at the authentic HIV-1 PR recognition site and release of the mature p17 matrix and the p24 capsid protein, as a result of the cleavage of the -SQNY-|-PIVQ- cleavage site.. Retroviral proteases have roles in the processing of the primary translation products and the maturation of the viral particle. Endogenous Pro proteins may have kept, lost or modified their original function during evolution. The polypeptide is Endogenous retrovirus group K member 9 Pro protein (ERVK-9) (Homo sapiens (Human)).